Reading from the N-terminus, the 382-residue chain is 1-deoxy-D-xylulose 5-phosphate reductoisomerase (382 aa).

NADPH-binding residues include threonine 10, glycine 11, serine 12, isoleucine 13, glycine 36, and asparagine 122. Residue lysine 123 coordinates 1-deoxy-D-xylulose 5-phosphate. Glutamate 124 contributes to the NADPH binding site. Aspartate 148 lines the Mn(2+) pocket. Residues serine 149, glutamate 150, serine 174, and histidine 197 each coordinate 1-deoxy-D-xylulose 5-phosphate. Glutamate 150 is a binding site for Mn(2+). Glycine 203 lines the NADPH pocket. Residues serine 210, asparagine 215, lysine 216, and glutamate 219 each contribute to the 1-deoxy-D-xylulose 5-phosphate site. Glutamate 219 is a binding site for Mn(2+).

It belongs to the DXR family. The cofactor is Mg(2+). Mn(2+) serves as cofactor.

It carries out the reaction 2-C-methyl-D-erythritol 4-phosphate + NADP(+) = 1-deoxy-D-xylulose 5-phosphate + NADPH + H(+). Its pathway is isoprenoid biosynthesis; isopentenyl diphosphate biosynthesis via DXP pathway; isopentenyl diphosphate from 1-deoxy-D-xylulose 5-phosphate: step 1/6. In terms of biological role, catalyzes the NADPH-dependent rearrangement and reduction of 1-deoxy-D-xylulose-5-phosphate (DXP) to 2-C-methyl-D-erythritol 4-phosphate (MEP). This Prosthecochloris aestuarii (strain DSM 271 / SK 413) protein is 1-deoxy-D-xylulose 5-phosphate reductoisomerase.